A 427-amino-acid polypeptide reads, in one-letter code: Serine--tRNA ligase (427 aa).

232–234 (TAE) lines the L-serine pocket. 263–265 (RSE) contributes to the ATP binding site. Residue Glu-286 coordinates L-serine. 350-353 (EISS) is a binding site for ATP. Ser-385 lines the L-serine pocket.

This sequence belongs to the class-II aminoacyl-tRNA synthetase family. Type-1 seryl-tRNA synthetase subfamily. In terms of assembly, homodimer. The tRNA molecule binds across the dimer.

It is found in the cytoplasm. It carries out the reaction tRNA(Ser) + L-serine + ATP = L-seryl-tRNA(Ser) + AMP + diphosphate + H(+). The enzyme catalyses tRNA(Sec) + L-serine + ATP = L-seryl-tRNA(Sec) + AMP + diphosphate + H(+). The protein operates within aminoacyl-tRNA biosynthesis; selenocysteinyl-tRNA(Sec) biosynthesis; L-seryl-tRNA(Sec) from L-serine and tRNA(Sec): step 1/1. Catalyzes the attachment of serine to tRNA(Ser). Is also able to aminoacylate tRNA(Sec) with serine, to form the misacylated tRNA L-seryl-tRNA(Sec), which will be further converted into selenocysteinyl-tRNA(Sec). This Lacticaseibacillus paracasei (strain ATCC 334 / BCRC 17002 / CCUG 31169 / CIP 107868 / KCTC 3260 / NRRL B-441) (Lactobacillus paracasei) protein is Serine--tRNA ligase.